Consider the following 2225-residue polypeptide: Multifunctional protein CAD (2225 aa).

Alanine 2 carries the N-acetylalanine modification. Residues 2–365 (AALVLEDGSV…TVKEATAGNP (364 aa)) form a GATase (Glutamine amidotransferase) region. Residues serine 44, glycine 222, and glycine 224 each coordinate L-glutamine. Residues 177 to 363 (RILALDCGLK…LETVKEATAG (187 aa)) form the Glutamine amidotransferase type-1 domain. Cysteine 252 functions as the Nucleophile; for GATase activity in the catalytic mechanism. L-glutamine contacts are provided by leucine 253, glutamine 256, asparagine 294, glycine 296, and phenylalanine 297. Catalysis depends on for GATase activity residues histidine 336 and glutamate 338. The interval 366–394 (GGQTVRERLTERLCPPGIPTPGSGLPPPR) is linker. The CPSase A stretch occupies residues 395-933 (KVLILGSGGL…TTHDLTFRTP (539 aa)). The interval 395-1455 (KVLILGSGGL…APPLKVHVDC (1061 aa)) is CPSase (Carbamoyl phosphate synthase). Threonine 456 is modified (phosphothreonine; by MAPK1). Residues arginine 515, arginine 555, glycine 561, glycine 562, lysine 592, glutamate 599, glycine 625, isoleucine 626, histidine 627, glutamine 668, and glutamate 682 each coordinate ATP. One can recognise an ATP-grasp 1 domain in the interval 519–711 (AARMAEIGEH…LAYVAAKLAL (193 aa)). Positions 668, 682, and 684 each coordinate Mg(2+). The Mn(2+) site is built by glutamine 668, glutamate 682, and asparagine 684. N6-acetyllysine is present on lysine 747. Residues 934 to 1455 (HVLVLGSGVY…APPLKVHVDC (522 aa)) are CPSase B. A Phosphoserine modification is found at serine 1038. Residues 1052-1243 (SRLLDTIGIS…LVALATRVIM (192 aa)) enclose the ATP-grasp 2 domain. ATP-binding residues include arginine 1088, lysine 1127, isoleucine 1129, glutamate 1134, glycine 1159, valine 1160, histidine 1161, serine 1162, glutamine 1202, and glutamate 1214. 3 residues coordinate Mg(2+): glutamine 1202, glutamate 1214, and asparagine 1216. Positions 1202, 1214, and 1216 each coordinate Mn(2+). The region spanning 1308–1462 (FKIPKKNILL…VDCMTSQKLV (155 aa)) is the MGS-like domain. Serine 1406 carries the phosphoserine; by PKA modification. Lysine 1411 is modified (N6-acetyllysine). Residues 1456-1788 (MTSQKLVRLP…VKGTVRRVVL (333 aa)) are DHOase (dihydroorotase). The Zn(2+) site is built by histidine 1471 and histidine 1473. (S)-dihydroorotate contacts are provided by arginine 1475 and asparagine 1505. Zn(2+) is bound by residues lysine 1556, histidine 1590, cysteine 1613, histidine 1614, and glutamate 1637. At lysine 1556 the chain carries N6-carboxylysine. Position 1661 (arginine 1661) interacts with (S)-dihydroorotate. Aspartate 1686 provides a ligand contact to Zn(2+). Residue aspartate 1686 is the For DHOase activity of the active site. 2 residues coordinate (S)-dihydroorotate: histidine 1690 and proline 1702. The tract at residues 1789-1917 (RGEVAYIDGQ…GLLHPQTSPL (129 aa)) is linker. Positions 1811 to 1899 (KWPQGAVPQL…YPPPPVPRQA (89 aa)) are disordered. Residues 1825-1834 (PATSEMTTTP) show a composition bias toward polar residues. A Phosphoserine; by RPS6KB1 and PKA modification is found at serine 1859. Over residues 1866–1878 (EEPKEKSSRKVAE) the composition is skewed to basic and acidic residues. A Phosphoserine; by PKC; in vitro modification is found at serine 1873. Threonine 1884 is subject to Phosphothreonine. Serine 1900 and serine 1938 each carry phosphoserine. Positions 1918–2225 (LHSLVGQHIL…ALLATVLGRF (308 aa)) are ATCase (Aspartate transcarbamylase). 2 residues coordinate carbamoyl phosphate: arginine 1975 and threonine 1976. Residue lysine 2003 coordinates L-aspartate. Residues arginine 2024, histidine 2052, and glutamine 2055 each coordinate carbamoyl phosphate. 2 residues coordinate L-aspartate: arginine 2085 and arginine 2146. 2 residues coordinate carbamoyl phosphate: methionine 2185 and proline 2186.

In the N-terminal section; belongs to the CarA family. It in the 2nd section; belongs to the CarB family. This sequence in the 3rd section; belongs to the metallo-dependent hydrolases superfamily. DHOase family. CAD subfamily. The protein in the C-terminal section; belongs to the aspartate/ornithine carbamoyltransferase superfamily. ATCase family. In terms of assembly, homohexamer. Interacts with CIPC. It depends on Zn(2+) as a cofactor. Mg(2+) is required as a cofactor. The cofactor is Mn(2+). Activated by MAP kinase (Erk1/2) phosphorylation just prior to the S phase of the cell cycle, when the demand for pyrimidine nucleotides is greatest, and down-regulated as the cells emerge from S phase by protein kinase A (PKA) phosphorylation. Phosphorylation at Ser-1859 by RPS6KB1 downstream of MTOR promotes oligomerization and stimulates dihydroorotase activity. Phosphorylation at Ser-1406 reduces sensitivity to feedback inhibition by UTP.

It is found in the cytoplasm. Its subcellular location is the nucleus. It carries out the reaction hydrogencarbonate + L-glutamine + 2 ATP + H2O = carbamoyl phosphate + L-glutamate + 2 ADP + phosphate + 2 H(+). The enzyme catalyses L-glutamine + H2O = L-glutamate + NH4(+). It catalyses the reaction hydrogencarbonate + NH4(+) + 2 ATP = carbamoyl phosphate + 2 ADP + phosphate + 2 H(+). The catalysed reaction is carbamoyl phosphate + L-aspartate = N-carbamoyl-L-aspartate + phosphate + H(+). It carries out the reaction (S)-dihydroorotate + H2O = N-carbamoyl-L-aspartate + H(+). The protein operates within pyrimidine metabolism; UMP biosynthesis via de novo pathway; (S)-dihydroorotate from bicarbonate: step 1/3. It functions in the pathway pyrimidine metabolism; UMP biosynthesis via de novo pathway; (S)-dihydroorotate from bicarbonate: step 2/3. It participates in pyrimidine metabolism; UMP biosynthesis via de novo pathway; (S)-dihydroorotate from bicarbonate: step 3/3. Allosterically regulated and controlled by phosphorylation. 5-phosphoribose 1-diphosphate (PRPP) is an activator while UMP and UTP are inhibitors of the CPSase reaction. Multifunctional protein that encodes the first 3 enzymatic activities of the de novo pyrimidine pathway: carbamoylphosphate synthetase (CPSase; EC 6.3.5.5), aspartate transcarbamylase (ATCase; EC 2.1.3.2) and dihydroorotase (DHOase; EC 3.5.2.3). The CPSase-function is accomplished in 2 steps, by a glutamine-dependent amidotransferase activity (GATase) that binds and cleaves glutamine to produce ammonia, followed by an ammonium-dependent carbamoyl phosphate synthetase, which reacts with the ammonia, hydrogencarbonate and ATP to form carbamoyl phosphate. The endogenously produced carbamoyl phosphate is sequestered and channeled to the ATCase active site. ATCase then catalyzes the formation of carbamoyl-L-aspartate from L-aspartate and carbamoyl phosphate. In the last step, DHOase catalyzes the cyclization of carbamoyl aspartate to dihydroorotate. This Homo sapiens (Human) protein is Multifunctional protein CAD.